The primary structure comprises 398 residues: S-adenosylmethionine synthase (398 aa).

H16 contacts ATP. D18 is a Mg(2+) binding site. E44 is a K(+) binding site. The L-methionine site is built by E57 and Q100. Residues 100 to 110 (QSPDIAQGVNE) are flexible loop. ATP is bound by residues 175 to 177 (DAK), 242 to 243 (RF), D251, 257 to 258 (RK), A274, and K278. Residue D251 coordinates L-methionine. K282 is a binding site for L-methionine.

This sequence belongs to the AdoMet synthase family. In terms of assembly, homotetramer; dimer of dimers. Mg(2+) serves as cofactor. The cofactor is K(+).

The protein localises to the cytoplasm. It carries out the reaction L-methionine + ATP + H2O = S-adenosyl-L-methionine + phosphate + diphosphate. The protein operates within amino-acid biosynthesis; S-adenosyl-L-methionine biosynthesis; S-adenosyl-L-methionine from L-methionine: step 1/1. Its function is as follows. Catalyzes the formation of S-adenosylmethionine (AdoMet) from methionine and ATP. The overall synthetic reaction is composed of two sequential steps, AdoMet formation and the subsequent tripolyphosphate hydrolysis which occurs prior to release of AdoMet from the enzyme. The protein is S-adenosylmethionine synthase of Streptococcus agalactiae serotype III (strain NEM316).